A 77-amino-acid polypeptide reads, in one-letter code: Putative Fis-like DNA-binding protein (77 aa).

The segment at residues 53–72 (QSLAADYLGINRNTLRKKLQ) is a DNA-binding region (H-T-H motif).

The protein belongs to the transcriptional regulatory Fis family.

The protein is Putative Fis-like DNA-binding protein of Ralstonia nicotianae (strain ATCC BAA-1114 / GMI1000) (Ralstonia solanacearum).